Here is a 131-residue protein sequence, read N- to C-terminus: Large ribosomal subunit protein bL17 (131 aa).

The protein belongs to the bacterial ribosomal protein bL17 family. Part of the 50S ribosomal subunit. Contacts protein L32.

The polypeptide is Large ribosomal subunit protein bL17 (Cupriavidus pinatubonensis (strain JMP 134 / LMG 1197) (Cupriavidus necator (strain JMP 134))).